The chain runs to 836 residues: Protein IWS1 homolog A (836 aa).

Positions 1–542 are disordered; that stretch reads MEADNYSPEH…DMKSGKMGDY (542 aa). Basic and acidic residues-rich tracts occupy residues 20 to 36, 43 to 122, 133 to 148, 157 to 186, 206 to 218, 288 to 309, 370 to 386, and 458 to 469; these read QDER…EQRS, HQSE…DRSP, EPVR…DVPR, DERH…DKAP, DSKD…HAAS, VPVK…KASD, RSSE…KKLQ, and ERKSKTETKSAD. Acidic residues predominate over residues 476–485; sequence SDSENEEENL. Positions 533 to 542 are enriched in basic and acidic residues; the sequence is DMKSGKMGDY. A TFIIS N-terminal domain is found at 631-709; sequence SAIKEWLTPL…NEWSRPIFGL (79 aa). Residues 714 to 746 are disordered; sequence KGMTREEREQRDIEQMPQRRRMSSSGGQTPRRD. A compositionally biased stretch (basic and acidic residues) spans 716–727; that stretch reads MTREEREQRDIE.

The protein belongs to the IWS1 family.

It localises to the nucleus. Functionally, transcription factor which plays a key role in defining the composition of the RNA polymerase II (RNAPII) elongation complex and in modulating the production of mature mRNA transcripts. This chain is Protein IWS1 homolog A (iws1-a), found in Xenopus laevis (African clawed frog).